Consider the following 242-residue polypeptide: N-alpha-acetyltransferase 60 (242 aa).

Residues 1 to 192 are Cytoplasmic-facing; the sequence is MTEVVPSSAL…GGHPPWTILD (192 aa). The 170-residue stretch at 13 to 182 folds into the N-acetyltransferase domain; the sequence is VSLRLLCHDD…DGFTYVLYIN (170 aa). Residue tyrosine 38 participates in substrate binding. Lysine 79 is modified (N6-acetyllysine; by autocatalysis). Tyrosine 97 is a catalytic residue. Leucine 99 provides a ligand contact to substrate. 101–103 provides a ligand contact to acetyl-CoA; the sequence is LGV. An N6-acetyllysine; by autocatalysis mark is found at lysine 105, lysine 109, and lysine 121. 109–114 is a binding site for acetyl-CoA; the sequence is KHGIGS. Histidine 138 is an active-site residue. Acetyl-CoA is bound by residues asparagine 143 and 150-153; that span reads YENR. Lysine 156 is modified (N6-acetyllysine; by autocatalysis). The required for homodimerization stretch occupies residues 162 to 173; sequence PYYYSIRGVLKD. Tyrosine 165 provides a ligand contact to substrate. The segment at residues 193–236 is an intramembrane region (helical); that stretch reads YIQHLGSALASLSPCSIPHRVYRQAHSLLCSFLPWSGISSKSGI. At 237–242 the chain is on the cytoplasmic side; it reads EYSRTM.

It belongs to the acetyltransferase family. NAA60 subfamily. Monomer and homodimer; monomer in presence of substrate and homodimer in its absence. Post-translationally, acetylated: autoacetylation is required for optimal acetyltransferase activity.

It is found in the golgi apparatus membrane. The enzyme catalyses N-terminal L-methionyl-[transmembrane protein] + acetyl-CoA = N-terminal N(alpha)-acetyl-L-methionyl-[transmembrane protein] + CoA + H(+). The catalysed reaction is L-lysyl-[protein] + acetyl-CoA = N(6)-acetyl-L-lysyl-[protein] + CoA + H(+). In terms of biological role, N-alpha-acetyltransferase that specifically mediates the acetylation of N-terminal residues of the transmembrane proteins, with a strong preference for N-termini facing the cytosol. Displays N-terminal acetyltransferase activity towards a range of N-terminal sequences including those starting with Met-Lys, Met-Val, Met-Ala and Met-Met. Required for normal chromosomal segregation during anaphase. May also show histone acetyltransferase activity; such results are however unclear in vivo and would require additional experimental evidences. This chain is N-alpha-acetyltransferase 60, found in Homo sapiens (Human).